The primary structure comprises 433 residues: MLDIQLLRKDLDGVAKRLADRGYTLDVAAFSALEAERRAIQTRTEELQARRNSLSKQIGAMKGRGEDTSAVMAEVGGIGDEMKASAVKLDEIQARLSELMLEMPNVPHESVPVGRDETENVEVRRWGAPRQFDFDVKDHVDVGTPLGLDFETGAKLSGARFTVLRGPIARLHRALAQFMLDTHTQQHGYSETYTPYIVNPDVLYGTGQLPKFAEDMFRVEKGGAENTVTQYLISTSEISLTNTVRDSIVDASALPIKLTAHSPCFRSEAGSYGRDTRGMIRQHQFDKVEMVQIVAPEASYAALDEMVGHAEAILQTLELPYRVVALCTGDMGFSAAKTFDLEVWLPAQNTYREISSCSNTESFQARRMQARFRNAQGKPELVHTLNGSGLAVGRTLVAVLENYQNADGSVTVPVALRPYMGGVERIAAPSSAA.

235-237 (TSE) lines the L-serine pocket. Residue 266 to 268 (RSE) participates in ATP binding. L-serine is bound at residue glutamate 289. 353–356 (EISS) contributes to the ATP binding site. Residue serine 388 participates in L-serine binding.

Belongs to the class-II aminoacyl-tRNA synthetase family. Type-1 seryl-tRNA synthetase subfamily. As to quaternary structure, homodimer. The tRNA molecule binds across the dimer.

It is found in the cytoplasm. The catalysed reaction is tRNA(Ser) + L-serine + ATP = L-seryl-tRNA(Ser) + AMP + diphosphate + H(+). It carries out the reaction tRNA(Sec) + L-serine + ATP = L-seryl-tRNA(Sec) + AMP + diphosphate + H(+). The protein operates within aminoacyl-tRNA biosynthesis; selenocysteinyl-tRNA(Sec) biosynthesis; L-seryl-tRNA(Sec) from L-serine and tRNA(Sec): step 1/1. Its function is as follows. Catalyzes the attachment of serine to tRNA(Ser). Is also able to aminoacylate tRNA(Sec) with serine, to form the misacylated tRNA L-seryl-tRNA(Sec), which will be further converted into selenocysteinyl-tRNA(Sec). This Burkholderia thailandensis (strain ATCC 700388 / DSM 13276 / CCUG 48851 / CIP 106301 / E264) protein is Serine--tRNA ligase.